A 287-amino-acid polypeptide reads, in one-letter code: ATP synthase gamma chain (287 aa).

The protein belongs to the ATPase gamma chain family. F-type ATPases have 2 components, CF(1) - the catalytic core - and CF(0) - the membrane proton channel. CF(1) has five subunits: alpha(3), beta(3), gamma(1), delta(1), epsilon(1). CF(0) has three main subunits: a, b and c.

Its subcellular location is the cell inner membrane. Produces ATP from ADP in the presence of a proton gradient across the membrane. The gamma chain is believed to be important in regulating ATPase activity and the flow of protons through the CF(0) complex. The sequence is that of ATP synthase gamma chain from Cronobacter sakazakii (strain ATCC BAA-894) (Enterobacter sakazakii).